Here is a 162-residue protein sequence, read N- to C-terminus: Regulatory protein RecX (162 aa).

The protein belongs to the RecX family.

It localises to the cytoplasm. Its function is as follows. Modulates RecA activity. The polypeptide is Regulatory protein RecX (Xanthomonas axonopodis pv. citri (strain 306)).